Consider the following 187-residue polypeptide: Large ribosomal subunit protein uL6 (187 aa).

Residues 159 to 187 form a disordered region; sequence PYKGKGIRYKGEQLSSNPERLQVRSKEVR.

It belongs to the universal ribosomal protein uL6 family. In terms of assembly, part of the 50S ribosomal subunit.

Its function is as follows. This protein binds to the 23S rRNA, and is important in its secondary structure. It is located near the subunit interface in the base of the L7/L12 stalk, and near the tRNA binding site of the peptidyltransferase center. The chain is Large ribosomal subunit protein uL6 from Aquifex pyrophilus.